A 1188-amino-acid polypeptide reads, in one-letter code: Meiotically up-regulated gene 190 protein (1188 aa).

Positions 1–11 are enriched in polar residues; that stretch reads MSTHSGDSTKQ. Disordered regions lie at residues 1-61 and 83-125; these read MSTH…DPIT and FTVP…EADN. The span at 41–61 shows a compositional bias: basic and acidic residues; the sequence is EKKEEQQREQTENEKLFDPIT. Positions 84–112 are enriched in polar residues; sequence TVPNQSIQGSSLPSEKPYLSSNQPTNVYK. Residues 173–193 traverse the membrane as a helical segment; it reads LVISWFFTHSIIISAVLPLAI. An SMP-LTD domain is found at 228-453; it reads IPESAEWMNH…SPKSMTIDLS (226 aa). Positions 298–318 are disordered; that stretch reads ASESFSEKQASEAEHKDEPEQ. Residues 302–318 show a composition bias toward basic and acidic residues; sequence FSEKQASEAEHKDEPEQ. 2 consecutive C2 domains span residues 451-576 and 636-781; these read DLSK…ERCD and KEEE…TKWY. 6 residues coordinate Ca(2+): Asp-485, Asp-491, Asp-544, Asp-546, Ser-549, and Asp-552. 2 disordered regions span residues 615 to 639 and 1002 to 1066; these read TIPRSMRDDPAFQNPHGSLDNKEEE and QRAS…GTMN. A Phosphoserine modification is found at Ser-1005. Residues 1022–1032 are compositionally biased toward acidic residues; sequence DDSVDTEDEET.

It depends on Ca(2+) as a cofactor.

It is found in the cytoplasm. It localises to the endoplasmic reticulum membrane. The protein resides in the nucleus membrane. Its subcellular location is the cytoskeleton. The protein localises to the microtubule organizing center. It is found in the spindle pole body. Its function is as follows. Has a role in meiosis. The sequence is that of Meiotically up-regulated gene 190 protein (mug190) from Schizosaccharomyces pombe (strain 972 / ATCC 24843) (Fission yeast).